The chain runs to 509 residues: Carboxysome shell carbonic anhydrase (509 aa).

Zn(2+) is bound at residue cysteine 170. Aspartate 172 acts as the Proton acceptor in catalysis. Residues histidine 238 and cysteine 249 each contribute to the Zn(2+) site.

Belongs to the beta-class carbonic anhydrase family. CsoSCA subfamily. As to quaternary structure, homodimer. It depends on Zn(2+) as a cofactor.

The protein resides in the carboxysome. It carries out the reaction hydrogencarbonate + H(+) = CO2 + H2O. In terms of biological role, reversible hydration of carbon dioxide. Essential for photosynthetic carbon dioxide fixation, supplies CO(2) to RuBisCO (ribulose bisphosphate carboxylase, cbbL-cbbS) in the carboxysome. There are estimated to be 29 CsoSCA oligomers per carboxysome. This is Carboxysome shell carbonic anhydrase from Prochlorococcus marinus subsp. pastoris (strain CCMP1986 / NIES-2087 / MED4).